The following is a 175-amino-acid chain: Ribosome maturation factor RimM (175 aa).

Residues 95 to 175 (SEDEFYWREL…RIEVDWDPGF (81 aa)) form the PRC barrel domain.

This sequence belongs to the RimM family. In terms of assembly, binds ribosomal protein uS19.

It localises to the cytoplasm. Functionally, an accessory protein needed during the final step in the assembly of 30S ribosomal subunit, possibly for assembly of the head region. Essential for efficient processing of 16S rRNA. May be needed both before and after RbfA during the maturation of 16S rRNA. It has affinity for free ribosomal 30S subunits but not for 70S ribosomes. The sequence is that of Ribosome maturation factor RimM from Aliivibrio salmonicida (strain LFI1238) (Vibrio salmonicida (strain LFI1238)).